The following is a 175-amino-acid chain: Sialidase 85-1.3 (175 aa).

This sequence belongs to the glycosyl hydrolase 33 family.

It catalyses the reaction Hydrolysis of alpha-(2-&gt;3)-, alpha-(2-&gt;6)-, alpha-(2-&gt;8)- glycosidic linkages of terminal sialic acid residues in oligosaccharides, glycoproteins, glycolipids, colominic acid and synthetic substrates.. In terms of biological role, developmentally regulated neuraminidase implicated in parasite invasion of cells. May contribute to the pathology during T.cruzi infection by cleaving sialic acid from cells of the immune system. This Trypanosoma cruzi protein is Sialidase 85-1.3 (SA85-1.3).